The chain runs to 1001 residues: Sarcoplasmic/endoplasmic reticulum calcium ATPase 1 (1001 aa).

A run of 4 helical transmembrane segments spans residues 49-69, 90-110, 254-273, and 296-313; these read LWEL…LLAA, EPFV…WQER, DEFG…AVWL, and FKIA…GLPA. Positions 304, 305, 307, and 309 each coordinate Ca(2+). Asp351 functions as the 4-aspartylphosphate intermediate in the catalytic mechanism. The Mg(2+) site is built by Asp351 and Thr353. Residue Thr353 coordinates ATP. Thr441 bears the Phosphothreonine mark. The ATP site is built by Glu442, Arg489, Lys515, and Arg560. Thr569 is modified (phosphothreonine). Ser581 is modified (phosphoserine). ATP contacts are provided by Thr625, Gly626, Asp627, Arg678, and Lys684. Mg(2+) is bound at residue Asp703. Residue Asn706 coordinates ATP. The next 3 helical transmembrane spans lie at 758–777, 788–808, and 829–851; these read KQFI…CIFL, IPVQ…TALG, and ISGW…TVGA. Ca(2+) contacts are provided by Asn768, Glu771, Asn796, Thr799, and Asp800. The interval 788–808 is interaction with PLN; sequence IPVQLLWVNLVTDGLPATALG. Cys876 and Cys888 are disulfide-bonded. A run of 3 helical transmembrane segments spans residues 898–917, 931–949, and 965–985; these read TMAL…NSLS, IWLL…LILY, and TQWL…EILK. Glu908 provides a ligand contact to Ca(2+). The tract at residues 932–943 is interaction with PLN; it reads WLLGSICLSMSL.

The protein belongs to the cation transport ATPase (P-type) (TC 3.A.3) family. Type IIA subfamily. Interacts with sarcolipin (SLN). Interacts with phospholamban (PLN). Interacts with myoregulin (MRLN). Interacts with DWORF. Interacts with VMP1. Requires Mg(2+) as cofactor. In terms of tissue distribution, skeletal muscle, fast twitch muscle (type II) fibers.

The protein resides in the endoplasmic reticulum membrane. It is found in the sarcoplasmic reticulum membrane. It carries out the reaction Ca(2+)(in) + ATP + H2O = Ca(2+)(out) + ADP + phosphate + H(+). Inhibited by sarcolipin (SLN) and myoregulin (MRLN). Has also been shown to be reversibly inhibited by phospholamban (PLN) at low calcium concentrations in vitro. Dephosphorylated PLN decreases the apparent affinity of the ATPase for calcium and this inhibition is regulated by the phosphorylation of PLN in vitro. Enhanced by DWORF; DWORF increases activity by displacing sarcolipin (SLN), phospholamban (PLN) and myoregulin (MRLN). In terms of biological role, key regulator of striated muscle performance by acting as the major Ca(2+) ATPase responsible for the reuptake of cytosolic Ca(2+) into the sarcoplasmic reticulum. Catalyzes the hydrolysis of ATP coupled with the translocation of calcium from the cytosol to the sarcoplasmic reticulum lumen. Contributes to calcium sequestration involved in muscular excitation/contraction. In Homo sapiens (Human), this protein is Sarcoplasmic/endoplasmic reticulum calcium ATPase 1.